The chain runs to 248 residues: tRNA pseudouridine synthase A (248 aa).

Residue Asp-53 is the Nucleophile of the active site. Tyr-111 contacts substrate.

The protein belongs to the tRNA pseudouridine synthase TruA family. Homodimer.

It carries out the reaction uridine(38/39/40) in tRNA = pseudouridine(38/39/40) in tRNA. Functionally, formation of pseudouridine at positions 38, 39 and 40 in the anticodon stem and loop of transfer RNAs. The protein is tRNA pseudouridine synthase A of Streptococcus thermophilus (strain ATCC BAA-491 / LMD-9).